We begin with the raw amino-acid sequence, 519 residues long: Ent-kaurene oxidase (519 aa).

At 1-10 (MDTLLSLQAV) the chain is on the chloroplast intermembrane side. Residues 11-31 (PAAAAIGGPVVAIGGITLFFI) traverse the membrane as a helical segment. The Cytoplasmic segment spans residues 32-519 (REYVKDQRKK…PRLRDRVCVS (488 aa)). Residue C458 coordinates heme.

It belongs to the cytochrome P450 family. Requires heme as cofactor.

The protein localises to the plastid. Its subcellular location is the chloroplast outer membrane. The enzyme catalyses ent-kaur-16-ene + 3 reduced [NADPH--hemoprotein reductase] + 3 O2 = ent-kaur-16-en-19-oate + 3 oxidized [NADPH--hemoprotein reductase] + 4 H2O + 4 H(+). It participates in plant hormone biosynthesis; gibberellin biosynthesis. In terms of biological role, catalyzes three successive oxidations of the 4-methyl group of ent-kaurene giving kaurenoic acid, a key step in gibberellins (GAs) biosynthesis. GAs, which are involved many processes, including stem elongation, play a central role in plant development. The chain is Ent-kaurene oxidase from Salvia miltiorrhiza (Chinese sage).